A 156-amino-acid polypeptide reads, in one-letter code: MSRRHSAEKREVIPDAKFGDVILTKFMNSIMYDGKKSVAEAIVYDAFDIIEQKARTEPLGVFKQALENVAPAIEVRSRRVGGATYQVPVEVRMERRQALAIRWIITAARGRNDKTMVDRLSAELMDAANNRGNAVKKREDTHRMAEANRAFSHYRW.

It belongs to the universal ribosomal protein uS7 family. In terms of assembly, part of the 30S ribosomal subunit. Contacts proteins S9 and S11.

One of the primary rRNA binding proteins, it binds directly to 16S rRNA where it nucleates assembly of the head domain of the 30S subunit. Is located at the subunit interface close to the decoding center, probably blocks exit of the E-site tRNA. The protein is Small ribosomal subunit protein uS7 of Methylocella silvestris (strain DSM 15510 / CIP 108128 / LMG 27833 / NCIMB 13906 / BL2).